The chain runs to 719 residues: DNA replication licensing factor MCM7 (719 aa).

N-acetylalanine is present on Ala-2. Residues Lys-15 and Lys-28 each participate in a glycyl lysine isopeptide (Lys-Gly) (interchain with G-Cter in SUMO2) cross-link. Ser-314 carries the phosphoserine modification. An MCM domain is found at 332-538 (FYEKLAASIA…NDLRLAQHIT (207 aa)). Tyr-345 provides a ligand contact to ATP. Position 365 is a phosphoserine (Ser-365). 5 residues coordinate ATP: Gly-384, Ala-386, Lys-387, Ser-388, and Asn-489. Ser-500 is modified (phosphoserine). An Arginine finger motif is present at residues 513–516 (SRFD). Arg-514 lines the ATP pocket. The tract at residues 521–564 (IQDRPDRDNDLRLAQHITYVHQHSRQPPAQFEPLDMKLMRRYIA) is interaction with RAD17. The tract at residues 577–719 (LADYITAAYV…NTSRTRITFV (143 aa)) is interaction with ATRIP. Arg-604 contacts ATP. The residue at position 678 (Ser-678) is a Phosphoserine.

It belongs to the MCM family. As to quaternary structure, component of the MCM2-7 complex. The complex forms a toroidal hexameric ring with the proposed subunit order MCM2-MCM6-MCM4-MCM7-MCM3-MCM5. Component of the CMG helicase complex, a hexameric ring of related MCM2-7 subunits stabilized by CDC45 and the tetrameric GINS complex. Interacts with the ATR-ATRIP complex and with RAD17. Interacts with TIPIN. Interacts with MCMBP. Interacts with ANKRD17. Component of the replisome complex composed of at least DONSON, MCM2, MCM7, PCNA and TICRR. O-glycosylated (O-GlcNAcylated), in a cell cycle-dependent manner. Post-translationally, ubiquitinated by ECS(LRR1) E3 ubiquitin-protein ligase complex when forks converge following formation of DNA interstrand cross-links. During mitosis, ubiquitinated by TRAIP when forks converge following formation of DNA interstrand cross-links. Short ubiquitin chains on MCM7 promote recruitment of DNA glycosylase NEIL3. If the interstrand cross-link cannot be cleaved by NEIL3, the ubiquitin chains continue to grow on MCM7, promoting the unloading of the CMG helicase complex by the VCP/p97 ATPase.

It is found in the nucleus. It localises to the chromosome. It catalyses the reaction ATP + H2O = ADP + phosphate + H(+). Acts as a component of the MCM2-7 complex (MCM complex) which is the replicative helicase essential for 'once per cell cycle' DNA replication initiation and elongation in eukaryotic cells. Core component of CDC45-MCM-GINS (CMG) helicase, the molecular machine that unwinds template DNA during replication, and around which the replisome is built. The active ATPase sites in the MCM2-7 ring are formed through the interaction surfaces of two neighboring subunits such that a critical structure of a conserved arginine finger motif is provided in trans relative to the ATP-binding site of the Walker A box of the adjacent subunit. The six ATPase active sites, however, are likely to contribute differentially to the complex helicase activity. Uncomplexed form does not show ATPase or DNA helicase. Required for S-phase checkpoint activation upon UV-induced damage. The chain is DNA replication licensing factor MCM7 (Mcm7) from Mus musculus (Mouse).